Reading from the N-terminus, the 87-residue chain is Small ribosomal subunit protein uS17 (87 aa).

It belongs to the universal ribosomal protein uS17 family. Part of the 30S ribosomal subunit.

In terms of biological role, one of the primary rRNA binding proteins, it binds specifically to the 5'-end of 16S ribosomal RNA. The protein is Small ribosomal subunit protein uS17 of Bacillus cytotoxicus (strain DSM 22905 / CIP 110041 / 391-98 / NVH 391-98).